The sequence spans 478 residues: RNA exonuclease 3 (478 aa).

Positions 320–465 (VLALDCEMAF…EDAIAAMDVI (146 aa)) constitute an Exonuclease domain.

This sequence belongs to the REXO1/REXO3 family.

It is found in the cytoplasm. It localises to the nucleus. In terms of biological role, 3' to 5' exoribonuclease required for proper 3' end maturation of MRP RNA and of the U5L snRNA. The protein is RNA exonuclease 3 (REX3) of Kluyveromyces lactis (strain ATCC 8585 / CBS 2359 / DSM 70799 / NBRC 1267 / NRRL Y-1140 / WM37) (Yeast).